The primary structure comprises 82 residues: Cortexin-1 (82 aa).

Residues 1–20 (MSSAWTLSPEPLPPSTGPPV) are disordered. Residues 30-50 (TVFAFVLCLLVVLVLLMVRCV) form a helical membrane-spanning segment.

Belongs to the cortexin family.

It localises to the membrane. Functionally, may mediate extracellular or intracellular signaling of cortical neurons during forebrain development. This is Cortexin-1 (Ctxn1) from Mus musculus (Mouse).